The primary structure comprises 855 residues: DNA mismatch repair protein MutS (855 aa).

Residue 613-620 (GPNMGGKS) participates in ATP binding.

Belongs to the DNA mismatch repair MutS family.

This protein is involved in the repair of mismatches in DNA. It is possible that it carries out the mismatch recognition step. This protein has a weak ATPase activity. The sequence is that of DNA mismatch repair protein MutS from Azotobacter vinelandii (strain DJ / ATCC BAA-1303).